The following is a 483-amino-acid chain: Probable gamma-aminobutyrate transaminase 4 (483 aa).

138–139 is a pyridoxal 5'-phosphate binding site; the sequence is GS. A substrate-binding site is contributed by Y171. D278 contributes to the pyridoxal 5'-phosphate binding site. A substrate-binding site is contributed by K307. K307 is subject to N6-(pyridoxal phosphate)lysine.

Belongs to the class-III pyridoxal-phosphate-dependent aminotransferase family. In terms of tissue distribution, not detected in roots, stems, flowers or leaves of healthy plants.

The protein localises to the cytoplasm. The enzyme catalyses 4-aminobutanoate + pyruvate = succinate semialdehyde + L-alanine. It carries out the reaction 4-aminobutanoate + glyoxylate = succinate semialdehyde + glycine. Its function is as follows. Transaminase that degrades gamma-amino butyric acid (GABA). This chain is Probable gamma-aminobutyrate transaminase 4 (GABA-T), found in Oryza sativa subsp. japonica (Rice).